The following is a 388-amino-acid chain: Succinate--CoA ligase [ADP-forming] subunit beta (388 aa).

The ATP-grasp domain occupies 9–244 (KQIFAEYQLP…PSQEDPREAL (236 aa)). ATP is bound by residues lysine 46, 53 to 55 (GRG), glutamate 99, serine 102, and glutamate 107. The Mg(2+) site is built by asparagine 199 and aspartate 213. Substrate-binding positions include asparagine 264 and 321-323 (GIV).

This sequence belongs to the succinate/malate CoA ligase beta subunit family. Heterotetramer of two alpha and two beta subunits. Mg(2+) is required as a cofactor.

The catalysed reaction is succinate + ATP + CoA = succinyl-CoA + ADP + phosphate. It catalyses the reaction GTP + succinate + CoA = succinyl-CoA + GDP + phosphate. Its pathway is carbohydrate metabolism; tricarboxylic acid cycle; succinate from succinyl-CoA (ligase route): step 1/1. Functionally, succinyl-CoA synthetase functions in the citric acid cycle (TCA), coupling the hydrolysis of succinyl-CoA to the synthesis of either ATP or GTP and thus represents the only step of substrate-level phosphorylation in the TCA. The beta subunit provides nucleotide specificity of the enzyme and binds the substrate succinate, while the binding sites for coenzyme A and phosphate are found in the alpha subunit. The polypeptide is Succinate--CoA ligase [ADP-forming] subunit beta (Pasteurella multocida (strain Pm70)).